Here is a 359-residue protein sequence, read N- to C-terminus: MSKPPSDPPRRAPAAFIYEDEATERRDNGRQGGERRKPESFSEHIVVTPDEDDPFLNPDKDLSAVPVAAPRKRRTSFGKIAAGAFGILLSLAIGLWTDSLIRDLFTRADWLGYAALAVLAVGILAVLALVIRETSGMMRLATVQTIKAEADAAMLETRPVKARAVVARLTALLSANPETAKGRATLKATEGEVIDPPHLMALAERELLAPLDRKARALIVNASKRVSIVTAVSPRAVVDLLYVLYEAVRLIRAMAELYGSRPGTLGMFRLLRDVLAHLAVTGSIAVGDSLVQQVLGHGLASKLSARLGEGVINGLMTARIGIAAMDLCRPLAFRALKRPGIGDFIGDLTPSMSPRGNNP.

The interval 1-48 (MSKPPSDPPRRAPAAFIYEDEATERRDNGRQGGERRKPESFSEHIVVT) is disordered. The segment covering 23–42 (TERRDNGRQGGERRKPESFS) has biased composition (basic and acidic residues). Transmembrane regions (helical) follow at residues 77-97 (FGKI…GLWT) and 111-131 (LGYA…ALVI).

Belongs to the UPF0283 family.

It localises to the cell inner membrane. In Rhizobium johnstonii (strain DSM 114642 / LMG 32736 / 3841) (Rhizobium leguminosarum bv. viciae), this protein is UPF0283 membrane protein RL2646.